We begin with the raw amino-acid sequence, 132 residues long: Phosphoribosyl-AMP cyclohydrolase (132 aa).

D79 lines the Mg(2+) pocket. C80 serves as a coordination point for Zn(2+). D81 and D83 together coordinate Mg(2+). Zn(2+) contacts are provided by C100 and C107.

The protein belongs to the PRA-CH family. In terms of assembly, homodimer. It depends on Mg(2+) as a cofactor. Requires Zn(2+) as cofactor.

Its subcellular location is the cytoplasm. The catalysed reaction is 1-(5-phospho-beta-D-ribosyl)-5'-AMP + H2O = 1-(5-phospho-beta-D-ribosyl)-5-[(5-phospho-beta-D-ribosylamino)methylideneamino]imidazole-4-carboxamide. The protein operates within amino-acid biosynthesis; L-histidine biosynthesis; L-histidine from 5-phospho-alpha-D-ribose 1-diphosphate: step 3/9. Catalyzes the hydrolysis of the adenine ring of phosphoribosyl-AMP. The polypeptide is Phosphoribosyl-AMP cyclohydrolase (Acidovorax ebreus (strain TPSY) (Diaphorobacter sp. (strain TPSY))).